The chain runs to 273 residues: Urease accessory protein UreD (273 aa).

This sequence belongs to the UreD family. As to quaternary structure, ureD, UreF and UreG form a complex that acts as a GTP-hydrolysis-dependent molecular chaperone, activating the urease apoprotein by helping to assemble the nickel containing metallocenter of UreC. The UreE protein probably delivers the nickel.

The protein localises to the cytoplasm. Its function is as follows. Required for maturation of urease via the functional incorporation of the urease nickel metallocenter. In Rhizobium etli (strain ATCC 51251 / DSM 11541 / JCM 21823 / NBRC 15573 / CFN 42), this protein is Urease accessory protein UreD.